Here is a 435-residue protein sequence, read N- to C-terminus: Adenylosuccinate synthetase (435 aa).

GTP-binding positions include 12–18 (GDEGKGK) and 40–42 (GHT). D13 (proton acceptor) is an active-site residue. The Mg(2+) site is built by D13 and G40. IMP contacts are provided by residues 13 to 16 (DEGK), 38 to 41 (NAGH), T130, R144, Q224, T239, and R301. H41 serves as the catalytic Proton donor. 297 to 303 (TVSNRKR) provides a ligand contact to substrate. GTP-binding positions include R303, 329 to 331 (KLD), and 411 to 413 (SAG).

This sequence belongs to the adenylosuccinate synthetase family. Homodimer. It depends on Mg(2+) as a cofactor.

It is found in the cytoplasm. It carries out the reaction IMP + L-aspartate + GTP = N(6)-(1,2-dicarboxyethyl)-AMP + GDP + phosphate + 2 H(+). The protein operates within purine metabolism; AMP biosynthesis via de novo pathway; AMP from IMP: step 1/2. Plays an important role in the de novo pathway of purine nucleotide biosynthesis. Catalyzes the first committed step in the biosynthesis of AMP from IMP. This is Adenylosuccinate synthetase from Wolbachia sp. subsp. Brugia malayi (strain TRS).